The primary structure comprises 371 residues: 3-dehydroquinate synthase (371 aa).

NAD(+) is bound by residues 114–118 (GVVGD), 138–139 (TT), lysine 151, lysine 160, and 178–181 (TLNT). Zn(2+)-binding residues include glutamate 193, histidine 258, and histidine 275.

Belongs to the sugar phosphate cyclases superfamily. Dehydroquinate synthase family. Co(2+) is required as a cofactor. Requires Zn(2+) as cofactor. NAD(+) serves as cofactor.

It is found in the cytoplasm. It catalyses the reaction 7-phospho-2-dehydro-3-deoxy-D-arabino-heptonate = 3-dehydroquinate + phosphate. The protein operates within metabolic intermediate biosynthesis; chorismate biosynthesis; chorismate from D-erythrose 4-phosphate and phosphoenolpyruvate: step 2/7. In terms of biological role, catalyzes the conversion of 3-deoxy-D-arabino-heptulosonate 7-phosphate (DAHP) to dehydroquinate (DHQ). This chain is 3-dehydroquinate synthase, found in Synechococcus sp. (strain CC9605).